A 420-amino-acid polypeptide reads, in one-letter code: Argininosuccinate synthase (420 aa).

Residues 9 to 17 and A35 contribute to the ATP site; that span reads AYSGGLDTS. L-citrulline contacts are provided by Y86 and S91. 114 to 122 is an ATP binding site; that stretch reads SHGCTGKGN. The L-aspartate site is built by T118, N122, and D123. N122 is an L-citrulline binding site. R126, S179, S188, E273, and Y285 together coordinate L-citrulline.

It belongs to the argininosuccinate synthase family. Type 1 subfamily. Homotetramer.

It localises to the cytoplasm. The enzyme catalyses L-citrulline + L-aspartate + ATP = 2-(N(omega)-L-arginino)succinate + AMP + diphosphate + H(+). It participates in amino-acid biosynthesis; L-arginine biosynthesis; L-arginine from L-ornithine and carbamoyl phosphate: step 2/3. In terms of biological role, catalyzes the eighth step in arginine biosynthesis. Also has a catabolic function as the first enzyme of citrulline utilization as nitrogen source via arginine and the reactions involved in the arginase pathway. The polypeptide is Argininosuccinate synthase (ARG1) (Saccharomyces cerevisiae (strain ATCC 204508 / S288c) (Baker's yeast)).